A 921-amino-acid chain; its full sequence is Translation initiation factor IF-2 (921 aa).

A disordered region spans residues 1–296 (MADNNTPGDK…PGPQKQRGRL (296 aa)). The segment covering 80-89 (RPSGPRPGSS) has biased composition (low complexity). The segment covering 116–182 (ARVRDMEERR…AKKRFGEGEA (67 aa)) has biased composition (basic and acidic residues). Low complexity predominate over residues 183–257 (PRPATAAPQQ…LGRAPGVAAG (75 aa)). A tr-type G domain is found at 417–586 (PRSPVVTVMG…MIALQADILD (170 aa)). Residues 426–433 (GHVDHGKT) form a G1 region. 426 to 433 (GHVDHGKT) provides a ligand contact to GTP. Residues 451–455 (GITQH) form a G2 region. A G3 region spans residues 474-477 (DTPG). GTP contacts are provided by residues 474 to 478 (DTPGH) and 528 to 531 (NKID). Residues 528–531 (NKID) are G4. The interval 564–566 (SAK) is G5.

It belongs to the TRAFAC class translation factor GTPase superfamily. Classic translation factor GTPase family. IF-2 subfamily.

Its subcellular location is the cytoplasm. In terms of biological role, one of the essential components for the initiation of protein synthesis. Protects formylmethionyl-tRNA from spontaneous hydrolysis and promotes its binding to the 30S ribosomal subunits. Also involved in the hydrolysis of GTP during the formation of the 70S ribosomal complex. This Bradyrhizobium sp. (strain BTAi1 / ATCC BAA-1182) protein is Translation initiation factor IF-2.